The following is a 122-amino-acid chain: EPIDERMAL PATTERNING FACTOR-like protein 1 (122 aa).

Residues 1–26 (MFAIYKSTLLLLPLILILLITPQVSS) form the signal peptide. 3 disulfides stabilise this stretch: Cys55–Cys113, Cys59–Cys65, and Cys62–Cys115.

This sequence belongs to the plant cysteine rich small secretory peptide family. Epidermal patterning factor subfamily.

It is found in the secreted. Controls stomatal patterning. The sequence is that of EPIDERMAL PATTERNING FACTOR-like protein 1 from Arabidopsis thaliana (Mouse-ear cress).